Here is a 130-residue protein sequence, read N- to C-terminus: Ribosome-binding factor A (130 aa).

The protein belongs to the RbfA family. In terms of assembly, monomer. Binds 30S ribosomal subunits, but not 50S ribosomal subunits or 70S ribosomes.

It localises to the cytoplasm. Its function is as follows. One of several proteins that assist in the late maturation steps of the functional core of the 30S ribosomal subunit. Associates with free 30S ribosomal subunits (but not with 30S subunits that are part of 70S ribosomes or polysomes). Required for efficient processing of 16S rRNA. May interact with the 5'-terminal helix region of 16S rRNA. This Prochlorococcus marinus (strain MIT 9215) protein is Ribosome-binding factor A.